Consider the following 132-residue polypeptide: Secreted RxLR effector protein RXLR-C22 (132 aa).

The signal sequence occupies residues 1–21 (MRSLVWAVIATLIVLTPFSEA). The RxLR-dEER signature appears at 56–74 (RKLQSDSVKKGDSTGLEER). Asn116 carries an N-linked (GlcNAc...) asparagine glycan.

The protein belongs to the RxLR effector family.

It localises to the secreted. It is found in the host Golgi apparatus. In terms of biological role, secreted effector that does not suppress pattern-triggered immunity (PTI) in plant host. The sequence is that of Secreted RxLR effector protein RXLR-C22 from Plasmopara halstedii (Downy mildew of sunflower).